A 305-amino-acid polypeptide reads, in one-letter code: Leucine-rich repeat-containing protein 25 (305 aa).

An N-terminal signal peptide occupies residues 1–20 (MGGTLAWTLLLPLLLRESDS). Over 21–165 (LEPSCTVSSA…SCAPGLASAT (145 aa)) the chain is Extracellular. 3 LRR repeats span residues 39–59 (SATC…QSLR), 62–83 (NVIL…FFAH), and 86–107 (KLEV…LAAR). Asn-44 and Asn-55 each carry an N-linked (GlcNAc...) asparagine glycan. Residues Asn-130 and Asn-148 are each glycosylated (N-linked (GlcNAc...) asparagine). Residues 166–186 (IGAVVVSGCLLLGLAIAGPVL) form a helical membrane-spanning segment. Over 187–305 (AWRLWRCRVA…DEEEYVIPGH (119 aa)) the chain is Cytoplasmic. The interval 204 to 229 (PWAAQDGPKPGLGLQPRYGSRSAPKP) is disordered. Tyr-284 is subject to Phosphotyrosine.

In terms of assembly, interacts with RIGI. Interacts with SQSTM1. Interacts with p65/RELA; this interaction promotes the degradation of RELA through autophagy. As to expression, expressed in plasmacytoid dendritic cells (PDC), monocyte-derived dendritic cells (MDDC), granulocytes, monocytes, B-lymphocytes, peripheral blood leukocytes, spleen, bone marrow, and, to a lesser extent, lymph nodes, fetal liver, and appendix but not in thymus.

It localises to the membrane. The protein resides in the cytoplasm. Plays a role in the inhibition of RLR-mediated type I interferon signaling pathway by targeting RIGI for autophagic degradation. Interacts specifically with ISG15-associated RIGI to promote interaction between RIGI and the autophagic cargo receptor p62/SQSTM1 to mediate RIGI degradation via selective autophagy. Also plays a role in the inhibition of NF-kappa-B signaling pathway and inflammatory response by promoting the degradation of p65/RELA. This Homo sapiens (Human) protein is Leucine-rich repeat-containing protein 25 (LRRC25).